Here is a 135-residue protein sequence, read N- to C-terminus: Histone H3 type 1 (135 aa).

Positions 1–40 (MARTKQTARKSTGGKAPRKQLATKAARKTPATGGVKKPHR) are disordered. At lysine 5 the chain carries N6-methyllysine. An N6-acetyllysine; alternate modification is found at lysine 10. Position 10 is an N6-methyllysine; alternate (lysine 10). Serine 11 is modified (phosphoserine). The residue at position 12 (threonine 12) is a Phosphothreonine. N6-acetyllysine occurs at positions 15, 19, and 24. Lysine 28 carries the post-translational modification N6-acetyllysine; alternate. At lysine 28 the chain carries N6-methyllysine; alternate. Lysine 36 and lysine 37 each carry N6-methyllysine.

This sequence belongs to the histone H3 family. The nucleosome is a histone octamer containing two molecules each of H2A, H2B, H3 and H4 assembled in one H3-H4 heterotetramer and two H2A-H2B heterodimers. The octamer wraps approximately 147 bp of DNA. Acetylation is generally linked to gene activation. Acetylated to form H3K9ac (11%), H3K14ac (17%), H3K18ac (11%), H3K23ac (16%) and H3K27ac (7%). H3K4, H3K35 and H3K36 are not acetylated. H3K4me prevents acetylation. 32% of the histone H3 are acetylated with, on average, 2.4 acetyl-Lys. They are all continuously deacatylated and re-acetylated with a half-life of approximately 2 minutes. Post-translationally, monomethylated to form H3K4me1 (81%), H3K9me1 (16%), H3K27me1 (25%), H3K35me1 (25%) and H3K36me1 (5%). No methylation at H3K14, H3K18 and H3K23. Methylated by a protein complex that includes Mut11. Set1 methylates specifically H3K4. H3K4me1 is associated with silenced euchromatin. Set3 forms H3K9me1, while H3K9me2 is undetected. H3K9me1 is specifically associated with silent, multi-copy transgenes. In terms of processing, no phosphorylation detected.

The protein resides in the nucleus. Its subcellular location is the chromosome. In terms of biological role, core component of nucleosome. Nucleosomes wrap and compact DNA into chromatin, limiting DNA accessibility to the cellular machineries which require DNA as a template. Histones thereby play a central role in transcription regulation, DNA repair, DNA replication and chromosomal stability. DNA accessibility is regulated via a complex set of post-translational modifications of histones, also called histone code, and nucleosome remodeling. The polypeptide is Histone H3 type 1 (ch3-I) (Chlamydomonas reinhardtii (Chlamydomonas smithii)).